The chain runs to 254 residues: Geranylgeranylglyceryl phosphate synthase (254 aa).

Mg(2+)-binding residues include Asp-28 and Ser-57. Sn-glycerol 1-phosphate contacts are provided by residues 176 to 182, 207 to 208, and 229 to 230; these read YLEAGSG, GG, and GT.

This sequence belongs to the GGGP/HepGP synthase family. Group II subfamily. Requires Mg(2+) as cofactor.

The protein resides in the cytoplasm. The enzyme catalyses sn-glycerol 1-phosphate + (2E,6E,10E)-geranylgeranyl diphosphate = sn-3-O-(geranylgeranyl)glycerol 1-phosphate + diphosphate. Its pathway is membrane lipid metabolism; glycerophospholipid metabolism. In terms of biological role, prenyltransferase that catalyzes the transfer of the geranylgeranyl moiety of geranylgeranyl diphosphate (GGPP) to the C3 hydroxyl of sn-glycerol-1-phosphate (G1P). This reaction is the first ether-bond-formation step in the biosynthesis of archaeal membrane lipids. This is Geranylgeranylglyceryl phosphate synthase from Pyrococcus horikoshii (strain ATCC 700860 / DSM 12428 / JCM 9974 / NBRC 100139 / OT-3).